A 1017-amino-acid chain; its full sequence is Sodium/potassium-transporting ATPase subunit alpha-2 (1017 aa).

The segment at 1–31 (MDGREYSPAATTSENGGGRRKQKEKELDELK) is disordered. Residues 1 to 82 (MDGREYSPAA…NALTPPPTTP (82 aa)) lie on the Cytoplasmic side of the membrane. Residues 77-79 (PPP) form an interaction with phosphoinositide-3 kinase region. Residues 83-103 (EWVKFCRQLFGGFSILLWIGA) form a helical membrane-spanning segment. Residues 104–126 (ILCFLAYGIQAAMEDEPSNDNLY) are Extracellular-facing. Residues 127–147 (LGVVLAAVVIVTGCFSYYQEA) form a helical membrane-spanning segment. Residues 148–283 (KSSKIMDSFK…VGRTPIAMEI (136 aa)) are Cytoplasmic-facing. The tract at residues 207 to 228 (KVDNSSLTGESEPQTRSPEFTH) is disordered. Over residues 209–224 (DNSSLTGESEPQTRSP) the composition is skewed to polar residues. The helical transmembrane segment at 284-303 (EHFIRLITGVAVFLGLSFFI) threads the bilayer. Residues 304 to 315 (LSLILGYTWLEA) lie on the Extracellular side of the membrane. A helical transmembrane segment spans residues 316 to 333 (VIFLIGIIVANVPEGLLA). Residues 334–766 (TVTVCLTLTA…EEGRLIFDNL (433 aa)) are Cytoplasmic-facing. Asp-371 serves as the catalytic 4-aspartylphosphate intermediate. Lys-502 contributes to the ATP binding site. Residues Asp-711 and Asp-715 each contribute to the Mg(2+) site. Residues 767-786 (KKSIAYTLTSNIPEITPFLL) traverse the membrane as a helical segment. Over 787–796 (FIIANIPLPL) the chain is Extracellular. Residues 797-817 (GTVTILCIDLGTDMVPAISLA) form a helical membrane-spanning segment. Over 818–837 (YEAAESDIMKRQPRNPRTDK) the chain is Cytoplasmic. The chain crosses the membrane as a helical span at residues 838–860 (LVNERLISMAYGQIGMIQALGGF). Over 861 to 912 (FTYFVILAENGFLPARLLGVRLAWDDRSTNDLEDSYGQEWTYEQRKVVEFTC) the chain is Extracellular. The helical transmembrane segment at 913–932 (HTAFFASIVVVQWADLIICK) threads the bilayer. At 933–945 (TRRNSVFQQGMKN) the chain is on the cytoplasmic side. Phosphoserine; by PKA is present on Ser-937. The helical transmembrane segment at 946–964 (KILIFGLLEETALAAFLSY) threads the bilayer. Topologically, residues 965–979 (CPGMGVALRMYPLKV) are extracellular. A helical membrane pass occupies residues 980–1000 (TWWFCAFPYSLLIFAYDEVRK). Topologically, residues 1001 to 1017 (LILRRYPGGWVEKETYY) are cytoplasmic.

The protein belongs to the cation transport ATPase (P-type) (TC 3.A.3) family. Type IIC subfamily. As to quaternary structure, the sodium/potassium-transporting ATPase is composed of a catalytic alpha subunit, an auxiliary non-catalytic beta subunit and an additional regulatory subunit.

Its subcellular location is the membrane. The protein resides in the cell membrane. It carries out the reaction K(+)(out) + Na(+)(in) + ATP + H2O = K(+)(in) + Na(+)(out) + ADP + phosphate + H(+). This is the catalytic component of the active enzyme, which catalyzes the hydrolysis of ATP coupled with the exchange of sodium and potassium ions across the plasma membrane. This action creates the electrochemical gradient of sodium and potassium ions, providing the energy for active transport of various nutrients. This chain is Sodium/potassium-transporting ATPase subunit alpha-2 (ATP1A2), found in Gallus gallus (Chicken).